A 56-amino-acid chain; its full sequence is uncharacterized protein (56 aa).

A helical membrane pass occupies residues isoleucine 33 to isoleucine 53.

The protein resides in the host membrane. This is an uncharacterized protein from Bos taurus (Bovine).